The sequence spans 439 residues: GlutamylGlutaminyl-tRNA synthetase (439 aa).

The 'HIGH' region motif lies at 6 to 16; it reads PSPTGDMHIGN. The 'KMSKS' region motif lies at 232–236; that stretch reads KMSKR. Lysine 235 lines the ATP pocket.

This sequence belongs to the class-I aminoacyl-tRNA synthetase family. Glutamate--tRNA ligase type 1 subfamily. Monomer.

It is found in the cytoplasm. The catalysed reaction is tRNA(Glu) + L-glutamate + ATP = L-glutamyl-tRNA(Gln) + AMP + diphosphate. In terms of biological role, aminoacylates tRNA(Gln) with glutamate. Does not aminoacylate tRNA(Glu). This is GlutamylGlutaminyl-tRNA synthetase (gltX2) from Helicobacter pylori (strain ATCC 700392 / 26695) (Campylobacter pylori).